The chain runs to 137 residues: Fluoride-specific ion channel FluC 1 (137 aa).

4 helical membrane-spanning segments follow: residues 4-24 (LIYIIVGIAGILGALSRYYLG), 37-57 (LATLLINLAGCFLLAWLTTYI), 67-87 (VITGIGTGFIGSFTTFSTLSV), and 98-118 (WGIAFLYVSCSILGGLIMSGL). Residues Gly-77 and Thr-80 each coordinate Na(+).

This sequence belongs to the fluoride channel Fluc/FEX (TC 1.A.43) family.

The protein localises to the cell membrane. The catalysed reaction is fluoride(in) = fluoride(out). Its activity is regulated as follows. Na(+) is not transported, but it plays an essential structural role and its presence is essential for fluoride channel function. Functionally, fluoride-specific ion channel. Important for reducing fluoride concentration in the cell, thus reducing its toxicity. This Bacillus anthracis protein is Fluoride-specific ion channel FluC 1.